A 431-amino-acid polypeptide reads, in one-letter code: Trigger factor (431 aa).

The PPIase FKBP-type domain maps to 163 to 248 (GHFAVIDFTG…LSEIKVKELP (86 aa)).

The protein belongs to the FKBP-type PPIase family. Tig subfamily.

The protein localises to the cytoplasm. The enzyme catalyses [protein]-peptidylproline (omega=180) = [protein]-peptidylproline (omega=0). Its function is as follows. Involved in protein export. Acts as a chaperone by maintaining the newly synthesized protein in an open conformation. Functions as a peptidyl-prolyl cis-trans isomerase. This is Trigger factor from Geobacter sulfurreducens (strain ATCC 51573 / DSM 12127 / PCA).